The chain runs to 250 residues: MAEQASSFTDRLAARFAGAQISVVQPRGEVTLEVAAAQWHATCLALRDELGFEQLSDLCGVDYLGYGSDEWDTADVSSQGFSRGVEGKALGRFAWGEFPSQESSNGAQPQQLPTQRFAVVAQLISYQHNQRLRVRCYAPDEQVPVVASLTDIWPGVNWFEREAFDLFGIVFDGHPDLRRILTDYGFVGHPFRKDFPLIGNVEVRYDDERKRVVYEPVTSVEPRVGVPRVIRDDARYETAAGEVGKSETAK.

The protein belongs to the complex I 30 kDa subunit family. In terms of assembly, NDH-1 is composed of 14 different subunits. Subunits NuoB, C, D, E, F, and G constitute the peripheral sector of the complex.

Its subcellular location is the cell inner membrane. The catalysed reaction is a quinone + NADH + 5 H(+)(in) = a quinol + NAD(+) + 4 H(+)(out). Its function is as follows. NDH-1 shuttles electrons from NADH, via FMN and iron-sulfur (Fe-S) centers, to quinones in the respiratory chain. The immediate electron acceptor for the enzyme in this species is believed to be ubiquinone. Couples the redox reaction to proton translocation (for every two electrons transferred, four hydrogen ions are translocated across the cytoplasmic membrane), and thus conserves the redox energy in a proton gradient. The sequence is that of NADH-quinone oxidoreductase subunit C from Xanthomonas campestris pv. campestris (strain 8004).